Reading from the N-terminus, the 353-residue chain is Photosystem II D2 protein (353 aa).

Residue T2 is modified to N-acetylthreonine. Phosphothreonine is present on T2. A helical membrane pass occupies residues 41–61 (CAYFALGGWFTGTTFVTSWYT). Chlorophyll a is bound at residue H118. The helical transmembrane segment at 125-141 (GFMLRQFELARSVQLRP) threads the bilayer. Pheophytin a is bound by residues Q130 and N143. A helical transmembrane segment spans residues 153–166 (VFVSVFLIYPLGQS). H198 contacts chlorophyll a. Residues 208–228 (AALLCAIHGATVENTLFEDGD) form a helical membrane-spanning segment. H215 and F262 together coordinate a plastoquinone. H215 contacts Fe cation. H269 is a binding site for Fe cation. Residues 279–295 (GLWMSALGVVGLALNLR) traverse the membrane as a helical segment.

The protein belongs to the reaction center PufL/M/PsbA/D family. PSII is composed of 1 copy each of membrane proteins PsbA, PsbB, PsbC, PsbD, PsbE, PsbF, PsbH, PsbI, PsbJ, PsbK, PsbL, PsbM, PsbT, PsbX, PsbY, PsbZ, Psb30/Ycf12, at least 3 peripheral proteins of the oxygen-evolving complex and a large number of cofactors. It forms dimeric complexes. Requires The D1/D2 heterodimer binds P680, chlorophylls that are the primary electron donor of PSII, and subsequent electron acceptors. It shares a non-heme iron and each subunit binds pheophytin, quinone, additional chlorophylls, carotenoids and lipids. There is also a Cl(-1) ion associated with D1 and D2, which is required for oxygen evolution. The PSII complex binds additional chlorophylls, carotenoids and specific lipids. as cofactor.

The protein resides in the plastid. It localises to the chloroplast thylakoid membrane. It catalyses the reaction 2 a plastoquinone + 4 hnu + 2 H2O = 2 a plastoquinol + O2. Photosystem II (PSII) is a light-driven water:plastoquinone oxidoreductase that uses light energy to abstract electrons from H(2)O, generating O(2) and a proton gradient subsequently used for ATP formation. It consists of a core antenna complex that captures photons, and an electron transfer chain that converts photonic excitation into a charge separation. The D1/D2 (PsbA/PsbD) reaction center heterodimer binds P680, the primary electron donor of PSII as well as several subsequent electron acceptors. D2 is needed for assembly of a stable PSII complex. This is Photosystem II D2 protein from Ceratophyllum demersum (Rigid hornwort).